Reading from the N-terminus, the 702-residue chain is Elongation factor G 2 (702 aa).

In terms of domain architecture, tr-type G spans aspartate 8–alanine 285. GTP is bound by residues alanine 17–threonine 24, aspartate 84–histidine 88, and asparagine 138–aspartate 141.

It belongs to the TRAFAC class translation factor GTPase superfamily. Classic translation factor GTPase family. EF-G/EF-2 subfamily.

Its subcellular location is the cytoplasm. Functionally, catalyzes the GTP-dependent ribosomal translocation step during translation elongation. During this step, the ribosome changes from the pre-translocational (PRE) to the post-translocational (POST) state as the newly formed A-site-bound peptidyl-tRNA and P-site-bound deacylated tRNA move to the P and E sites, respectively. Catalyzes the coordinated movement of the two tRNA molecules, the mRNA and conformational changes in the ribosome. The chain is Elongation factor G 2 from Bdellovibrio bacteriovorus (strain ATCC 15356 / DSM 50701 / NCIMB 9529 / HD100).